A 654-amino-acid polypeptide reads, in one-letter code: DNA-directed RNA polymerase III subunit RPC3 (654 aa).

A Phosphothreonine modification is found at Thr27. Disordered stretches follow at residues 381–401 (LSRK…ASLP) and 422–448 (KSLQ…EDPH). A phosphoserine mark is found at Ser392 and Ser394. Positions 429-444 (DTQEEDEEEEDLDADT) are enriched in acidic residues. Residues 581-602 (LEWNMANLLFKKEKLKQENSTL) form a leucine-zipper region.

It belongs to the eukaryotic RPC3/POLR3C RNA polymerase subunit family. As to quaternary structure, component of the RNA polymerase III (Pol III) complex consisting of 17 subunits.

It is found in the cytoplasm. The protein localises to the nucleus. Functionally, DNA-dependent RNA polymerase catalyzes the transcription of DNA into RNA using the four ribonucleoside triphosphates as substrates. Specific core component of RNA polymerase III which synthesizes small RNAs, such as 5S rRNA and tRNAs. In Saccharomyces cerevisiae (strain ATCC 204508 / S288c) (Baker's yeast), this protein is DNA-directed RNA polymerase III subunit RPC3 (RPC82).